Here is a 156-residue protein sequence, read N- to C-terminus: Small ribosomal subunit protein uS7 (156 aa).

The protein belongs to the universal ribosomal protein uS7 family. Part of the 30S ribosomal subunit. Contacts proteins S9 and S11.

Its function is as follows. One of the primary rRNA binding proteins, it binds directly to 16S rRNA where it nucleates assembly of the head domain of the 30S subunit. Is located at the subunit interface close to the decoding center, probably blocks exit of the E-site tRNA. In Photorhabdus laumondii subsp. laumondii (strain DSM 15139 / CIP 105565 / TT01) (Photorhabdus luminescens subsp. laumondii), this protein is Small ribosomal subunit protein uS7.